A 657-amino-acid chain; its full sequence is Sodium/glucose cotransporter 4 (657 aa).

At 1 to 24 (MPASPEPVTATPEPEEVPAKFTLE) the chain is on the extracellular side. The helical transmembrane segment at 25–45 (AADIAVVVVYFVFVLAVGIWS) threads the bilayer. Topologically, residues 46 to 79 (SIRANRGTVGGYFLAGRSMTWWPIGASLMSSNVG) are cytoplasmic. The helical transmembrane segment at 80–100 (SGLFIGLAGTGAAGGLAVGGF) threads the bilayer. Topologically, residues 101–104 (EWNA) are extracellular. Residues 105–125 (AWVLIALGWIFVPVYISAGVV) form a helical membrane-spanning segment. The Cytoplasmic segment spans residues 126–147 (TMPEYLRKRFGGQRIRIYMSVL). A helical transmembrane segment spans residues 148 to 168 (SLILYILTKISTDIFSGALFI). Over 169–180 (QVSLGWDLYLST) the chain is Extracellular. Residues 181 to 201 (VILLAVTALYTIAGGLTAVIY) form a helical membrane-spanning segment. At 202 to 207 (TDALQT) the chain is on the cytoplasmic side. The chain crosses the membrane as a helical span at residues 208-228 (VIMVIGAFVLMFIAFDKVGWY). The Extracellular segment spans residues 229 to 265 (EGLLVQYEKAAPALTVPNTTCHLPRSDAFHIFRDPVT). An N-linked (GlcNAc...) asparagine glycan is attached at Asn-246. A helical membrane pass occupies residues 266 to 286 (GDIPWPGLIFGLTVLATWVWC). Residues 287–307 (TDQVIVQRSLSAKNLSHAKAG) lie on the Cytoplasmic side of the membrane. A helical transmembrane segment spans residues 308–328 (SVLGGYLKVFPMFFVVMPGMI). The Extracellular portion of the chain corresponds to 329 to 373 (SRALYPDEVACVDPDECQKICGAKVGCSNIAYPKLVVELMPVGMR). Residues 374-396 (GLMIAVMMAALMSSLTSIFNSSS) traverse the membrane as a helical segment. At 397–417 (TLFTMDIWQRIRPRASEKELM) the chain is on the cytoplasmic side. Residues 418–438 (VVGRVFILLLVALSIVWIPVI) form a helical membrane-spanning segment. The Extracellular segment spans residues 439–451 (QTANSGQLFDYIQ). A helical membrane pass occupies residues 452–472 (AITSFLSPPITTVFIMAIFWG). At 473–478 (RVNEQG) the chain is on the cytoplasmic side. A helical transmembrane segment spans residues 479–499 (AFWGLMVGLVVGMVRMIMEFV). Topologically, residues 500–520 (YGTPSCGETDLRPSLLKDVHY) are extracellular. The chain crosses the membrane as a helical span at residues 521–541 (LYFALILLALTVLIITAVSLC). At 542 to 636 (TAPIPEKHLV…SIEEDHMWKT (95 aa)) the chain is on the cytoplasmic side. The helical transmembrane segment at 637 to 657 (VCNVNALILLTANVFLWGYFA) threads the bilayer.

It belongs to the sodium:solute symporter (SSF) (TC 2.A.21) family.

The protein localises to the membrane. Its function is as follows. Probable sodium-dependent sugar transporter. The polypeptide is Sodium/glucose cotransporter 4 (slc5a9) (Danio rerio (Zebrafish)).